An 84-amino-acid chain; its full sequence is uncharacterized protein (84 aa).

Residues 7–23 (AFSGVIALYGGYLYLRL) traverse the membrane as a helical segment.

It localises to the membrane. This is an uncharacterized protein from Haemophilus influenzae (strain ATCC 51907 / DSM 11121 / KW20 / Rd).